Consider the following 963-residue polypeptide: Spliceosome associated factor 3, U4/U6 recycling protein (963 aa).

The segment covering 1–11 has biased composition (low complexity); that stretch reads MATAAATSASE. Disordered stretches follow at residues 1–36 and 49–86; these read MATA…RTRR and KTMG…YEWE. Ala2 is modified (N-acetylalanine). The tract at residues 2-351 is mediates interaction with PRPF3; it reads ATAAATSASE…LVPDLWIRYS (350 aa). A phosphoserine mark is found at Ser10 and Ser16. Basic and acidic residues predominate over residues 14–23; it reads AESKAGPKAD. Residues 21–46 adopt a coiled-coil conformation; the sequence is KADGEEDEVKAARTRRKVLSRAVAAA. The segment covering 57–69 has biased composition (acidic residues); it reads QQEEGVSESDGDE. Residues 82–110 are a coiled coil; it reads EYEWEYDEEEEKNQLEIERLEEQLSINVY. HAT repeat units follow at residues 126 to 158, 164 to 195, 201 to 237, 242 to 275, 324 to 356, 359 to 391, 394 to 430, and 487 to 520; these read GELT…DEIS, LDRE…YSVG, GGLE…FESA, ARLE…WSED, GDPA…YLDR, KVKD…AMER, VDHQ…YLRR, and NNMQ…LERA. Ser215 is modified (phosphoserine). Residues 487–520 form a required for interaction with USP4 region; it reads NNMQKARELWDSIMTRGNAKYANMWLEYYNLERA. The tract at residues 537–953 is necessary and sufficient for U6 snRNA binding; the sequence is CTSDYPEHVC…AATEAPKMSN (417 aa). Positions 559 to 619 form a coiled coil; it reads LEDWDIAVQK…ALKKKKKIRG (61 aa). Positions 600 to 670 are required for nuclear localization; it reads QRKRARAEKK…EVAPGPAGKC (71 aa). Positions 601-608 match the Nuclear localization signal motif; that stretch reads RKRARAEK. The span at 608-619 shows a compositional bias: basic and acidic residues; sequence KKALKKKKKIRG. Residues 608 to 712 form a disordered region; sequence KKALKKKKKI…SITVFVSNLP (105 aa). The segment covering 620-635 has biased composition (basic residues); sequence PEKRGADEDDEKEWGD. Residues 644–657 show a composition bias toward acidic residues; sequence RRRVENSIPAAGET. Ser650 is modified (phosphoserine). Phosphothreonine is present on Thr657. Over residues 695 to 712 the composition is skewed to basic and acidic residues; it reads VLHDSSKDSITVFVSNLP. An RRM 1 domain is found at 704–782; the sequence is ITVFVSNLPY…RPMFVSPCVD (79 aa). 3 positions are modified to phosphoserine: Ser769, Ser795, and Ser852. Residues 801-878 enclose the RRM 2 domain; that stretch reads HKLFISGLPF…NVIKVAISNP (78 aa). Basic and acidic residues predominate over residues 900 to 909; it reads PQTYGARGKG. Arg906 carries the omega-N-methylarginine modification.

In terms of assembly, component of the 7SK snRNP complex at least composed of P-TEFb (composed of CDK9 and CCNT1/cyclin-T1), HEXIM1, HEXIM2, BCDIN3, SART3 proteins and 7SK and U6 snRNAs. Interacts with AGO1 and AGO2. Interacts with PRPF3 and USP4; the interaction with PRPF3 is direct and recruits USP4 to its substrate PRPF3. Interacts with USP15; the interaction is direct.

Its subcellular location is the nucleus. The protein localises to the nucleoplasm. It localises to the cajal body. The protein resides in the nucleus speckle. It is found in the cytoplasm. Its function is as follows. U6 snRNP-binding protein that functions as a recycling factor of the splicing machinery. Promotes the initial reassembly of U4 and U6 snRNPs following their ejection from the spliceosome during its maturation. Also binds U6atac snRNPs and may function as a recycling factor for U4atac/U6atac spliceosomal snRNP, an initial step in the assembly of U12-type spliceosomal complex. The U12-type spliceosomal complex plays a role in the splicing of introns with non-canonical splice sites. May also function as a substrate-targeting factor for deubiquitinases like USP4 and USP15. Recruits USP4 to ubiquitinated PRPF3 within the U4/U5/U6 tri-snRNP complex, promoting PRPF3 deubiquitination and thereby regulating the spliceosome U4/U5/U6 tri-snRNP spliceosomal complex disassembly. May also recruit the deubiquitinase USP15 to histone H2B and mediate histone deubiquitination, thereby regulating gene expression and/or DNA repair. May play a role in hematopoiesis probably through transcription regulation of specific genes including MYC. The protein is Spliceosome associated factor 3, U4/U6 recycling protein of Pongo abelii (Sumatran orangutan).